The chain runs to 547 residues: Chaperonin GroEL (547 aa).

ATP-binding positions include 30-33, K51, 87-91, G415, and D496; these read TLGP and DGTTT.

The protein belongs to the chaperonin (HSP60) family. In terms of assembly, forms a cylinder of 14 subunits composed of two heptameric rings stacked back-to-back. Interacts with the co-chaperonin GroES.

The protein resides in the cytoplasm. It catalyses the reaction ATP + H2O + a folded polypeptide = ADP + phosphate + an unfolded polypeptide.. Functionally, together with its co-chaperonin GroES, plays an essential role in assisting protein folding. The GroEL-GroES system forms a nano-cage that allows encapsulation of the non-native substrate proteins and provides a physical environment optimized to promote and accelerate protein folding. This chain is Chaperonin GroEL, found in Chlorobium phaeobacteroides (strain DSM 266 / SMG 266 / 2430).